An 834-amino-acid chain; its full sequence is Probable basic-leucine zipper transcription factor D (834 aa).

The segment at 83–160 is disordered; the sequence is NNNNMLNDHS…SNNNSSSEGE (78 aa). A compositionally biased stretch (polar residues) spans 90–111; that stretch reads DHSSSPMRVPNSSPSLYNNSIE. Residues 119-157 show a composition bias toward low complexity; that stretch reads DNSNNNNNNNNNINVNDINVNDINSNSTNNNESNNNSSS. Residues 211 to 246 are a coiled coil; sequence SEQQQQQQQQQQQQQQQQQQQQQQQQQHQHLLQEHQ. Residues 378–405 form a disordered region; sequence VVDPPTHNQEDERNVKKQRRLIKNRESA. Positions 391 to 454 constitute a bZIP domain; the sequence is NVKKQRRLIK…KQLAAQNSNS (64 aa). Positions 393-402 are basic motif; that stretch reads KKQRRLIKNR. The tract at residues 407–414 is leucine-zipper; that stretch reads LSRMRKKI. Disordered stretches follow at residues 455-504 and 550-712; these read NNNS…QQQS and LSMS…KTPQ. Polar residues predominate over residues 550–595; the sequence is LSMSDSESSPQKSLRLSSNHHSLPDGTFNTIPIDQQTTATTNTKSL. 2 stretches are compositionally biased toward low complexity: residues 616-651 and 694-707; these read NNNNNNNNNNNNNNNNNNNNNNNNNNNNNNNNNNNN and TTTTTTTTTTTTST.

This sequence belongs to the bZIP family.

It localises to the nucleus. Its function is as follows. Probable transcriptional regulator. In Dictyostelium discoideum (Social amoeba), this protein is Probable basic-leucine zipper transcription factor D (bzpD).